The sequence spans 249 residues: Probable cobalt-factor III C(17)-methyltransferase (249 aa).

The protein belongs to the precorrin methyltransferase family.

It carries out the reaction Co(II)-factor III + S-adenosyl-L-methionine + H(+) = Co(II)-factor IV + S-adenosyl-L-homocysteine. Its pathway is cofactor biosynthesis; adenosylcobalamin biosynthesis; cob(II)yrinate a,c-diamide from sirohydrochlorin (anaerobic route): step 3/10. Functionally, methyltransferase that likely catalyzes the ring contraction and methylation of C-17 in cobalt-factor III to form cobalt-factor IV. May also convert cobalt-precorrin-3 to cobalt-precorrin-4. The protein is Probable cobalt-factor III C(17)-methyltransferase (cbiH) of Methanocaldococcus jannaschii (strain ATCC 43067 / DSM 2661 / JAL-1 / JCM 10045 / NBRC 100440) (Methanococcus jannaschii).